Consider the following 343-residue polypeptide: Cytoplasmic tRNA 2-thiolation protein 1 (343 aa).

Belongs to the TtcA family. CTU1/NCS6/ATPBD3 subfamily.

The protein resides in the cytoplasm. The protein operates within tRNA modification; 5-methoxycarbonylmethyl-2-thiouridine-tRNA biosynthesis. In terms of biological role, plays a central role in 2-thiolation of mcm(5)S(2)U at tRNA wobble positions of tRNA(Lys), tRNA(Glu) and tRNA(Gln). Directly binds tRNAs and probably acts by catalyzing adenylation of tRNAs, an intermediate required for 2-thiolation. It is unclear whether it acts as a sulfurtransferase that transfers sulfur from thiocarboxylated URM1 onto the uridine of tRNAs at wobble position. The protein is Cytoplasmic tRNA 2-thiolation protein 1 of Drosophila grimshawi (Hawaiian fruit fly).